We begin with the raw amino-acid sequence, 490 residues long: Bifunctional protein GlmU (490 aa).

Residues 1–241 (MSSPGDTAVL…SALVAGVNNR (241 aa)) are pyrophosphorylase. UDP-N-acetyl-alpha-D-glucosamine-binding positions include 12 to 15 (LAAG), K26, Q83, 88 to 89 (GT), 112 to 114 (SGD), G151, E166, N181, and N239. Residue D114 coordinates Mg(2+). N239 is a binding site for Mg(2+). The interval 242-262 (VQLAQLGAELNRRIVAAHQLA) is linker. Positions 263-490 (GVTVVDPATT…AGGRPAGEAE (228 aa)) are N-acetyltransferase. UDP-N-acetyl-alpha-D-glucosamine contacts are provided by R344 and K362. The active-site Proton acceptor is the H374. UDP-N-acetyl-alpha-D-glucosamine-binding residues include Y377 and N388. Acetyl-CoA is bound by residues A391, 397-398 (NY), S416, and A434. A disordered region spans residues 462–490 (RRKRPGSAAARAAEAAEKAAGGRPAGEAE). Over residues 467 to 490 (GSAAARAAEAAEKAAGGRPAGEAE) the composition is skewed to low complexity.

It in the N-terminal section; belongs to the N-acetylglucosamine-1-phosphate uridyltransferase family. In the C-terminal section; belongs to the transferase hexapeptide repeat family. In terms of assembly, homotrimer. It depends on Mg(2+) as a cofactor.

The protein localises to the cytoplasm. It carries out the reaction alpha-D-glucosamine 1-phosphate + acetyl-CoA = N-acetyl-alpha-D-glucosamine 1-phosphate + CoA + H(+). The catalysed reaction is N-acetyl-alpha-D-glucosamine 1-phosphate + UTP + H(+) = UDP-N-acetyl-alpha-D-glucosamine + diphosphate. The protein operates within nucleotide-sugar biosynthesis; UDP-N-acetyl-alpha-D-glucosamine biosynthesis; N-acetyl-alpha-D-glucosamine 1-phosphate from alpha-D-glucosamine 6-phosphate (route II): step 2/2. It functions in the pathway nucleotide-sugar biosynthesis; UDP-N-acetyl-alpha-D-glucosamine biosynthesis; UDP-N-acetyl-alpha-D-glucosamine from N-acetyl-alpha-D-glucosamine 1-phosphate: step 1/1. It participates in bacterial outer membrane biogenesis; LPS lipid A biosynthesis. Functionally, catalyzes the last two sequential reactions in the de novo biosynthetic pathway for UDP-N-acetylglucosamine (UDP-GlcNAc). The C-terminal domain catalyzes the transfer of acetyl group from acetyl coenzyme A to glucosamine-1-phosphate (GlcN-1-P) to produce N-acetylglucosamine-1-phosphate (GlcNAc-1-P), which is converted into UDP-GlcNAc by the transfer of uridine 5-monophosphate (from uridine 5-triphosphate), a reaction catalyzed by the N-terminal domain. This chain is Bifunctional protein GlmU, found in Mycobacterium avium (strain 104).